The sequence spans 570 residues: DNA polymerase/3'-5' exonuclease PolX (570 aa).

Positions 1-315 (MHKKDIIRLL…PLIPPEIRES (315 aa)) are DNA polymerase type-X. Positions 193, 195, and 240 each coordinate a divalent metal cation. Residues 333–570 (QIKGDLHMHS…DVEAFLKRND (238 aa)) form a 3'-5' exonuclease region. Positions 339, 341, 371, 410, 437, 465, 526, and 528 each coordinate Mn(2+).

In the N-terminal section; belongs to the DNA polymerase type-X family. The protein in the C-terminal section; belongs to the PHP family. Monomer. The cofactor is Mn(2+). Mg(2+) is required as a cofactor.

The enzyme catalyses DNA(n) + a 2'-deoxyribonucleoside 5'-triphosphate = DNA(n+1) + diphosphate. It catalyses the reaction Exonucleolytic cleavage in the 3'- to 5'-direction to yield nucleoside 5'-phosphates.. With respect to regulation, the polymerization activity is inhibited in the presence of 2'-3'-dideoxynucleoside 5'-triphosphate (ddNTP). In terms of biological role, strictly DNA-template-directed DNA polymerase, preferentially acting on DNA structures containing gaps from one to a few nucleotides and bearing a phosphate group at the 5' end of the downstream DNA. The fact that PolX is able to conduct filling of a single-nucleotide gap, allowing further sealing of the resulting nick by a DNA ligase, points to a putative role in base excision repair (BER) during the B.subtilis life cycle. Moreover, also possesses a 3'-5' exonuclease activity able to edit unpaired 3'-termini in a gapped DNA substrate and likely involved in resecting unannealed 3'-termini during DNA repair. The same PolX molecule could perform the subsequent gap-filling step. Does not display 5'-deoxyribose 5'-phosphate (dRP) lyase activity, as predicted by the lack of the lysine and tyrosine residues responsible for the dRP lyase activity in some other PolX members. This is DNA polymerase/3'-5' exonuclease PolX (polX) from Bacillus subtilis (strain 168).